The following is a 440-amino-acid chain: Proton extrusion protein PxcA (440 aa).

The next 4 helical transmembrane spans lie at 222–242 (FVLT…TFFL), 316–336 (NAIA…LVLV), 352–374 (IVYG…MFVG), and 400–420 (FNFL…KYWI).

It belongs to the CemA family.

The protein resides in the cell inner membrane. Required for H(+) efflux immediately after light irradiation to form a rapid H(+) concentration gradient across the thylakoid membranes. Together with PxcL, contributes to transient H(+) uptake following dark to light transition. Involved in light-induced Na(+)-dependent proton extrusion. Also seems to be involved in CO(2) transport. This is Proton extrusion protein PxcA from Synechocystis sp. (strain ATCC 27184 / PCC 6803 / Kazusa).